A 222-amino-acid chain; its full sequence is Germin-like protein subfamily 1 member 5 (222 aa).

Residues 1–24 (MKGLLHFLLAKIILLALASSFVYC) form the signal peptide. Cys-34 and Cys-50 are joined by a disulfide. N-linked (GlcNAc...) asparagine glycans are attached at residues Asn-38 and Asn-71. In terms of domain architecture, Cupin type-1 spans 64–215 (SGLNVPGNTS…AFALDFNKVK (152 aa)). Mn(2+) contacts are provided by His-112, His-114, and Glu-119. Asn-139 carries an N-linked (GlcNAc...) asparagine glycan. Mn(2+) is bound at residue His-163.

It belongs to the germin family. Oligomer (believed to be a pentamer but probably hexamer).

The protein localises to the secreted. The protein resides in the extracellular space. Its subcellular location is the apoplast. In terms of biological role, may play a role in plant defense. Probably has no oxalate oxidase activity even if the active site is conserved. This is Germin-like protein subfamily 1 member 5 from Arabidopsis thaliana (Mouse-ear cress).